Here is a 106-residue protein sequence, read N- to C-terminus: BLOC-1-related complex subunit 7 (106 aa).

Belongs to the BORCS7 family. In terms of assembly, component of the BLOC-one-related complex (BORC) which is composed of BLOC1S1, BLOC1S2, BORCS5, BORCS6, BORCS7, BORCS8, KXD1 and SNAPIN.

It localises to the lysosome membrane. Its function is as follows. As part of the BORC complex may play a role in lysosomes movement and localization at the cell periphery. Associated with the cytosolic face of lysosomes, the BORC complex may recruit ARL8B and couple lysosomes to microtubule plus-end-directed kinesin motor. This Homo sapiens (Human) protein is BLOC-1-related complex subunit 7.